Consider the following 144-residue polypeptide: MNHKVLLINGPNLNLLGRREPSVYGHQTLADIVALLSEQAQAAGVELEHIQSNAEFELINAIHATDAQMIIINPAAFTHTSVALRDALLGVDIPFFEVHLSNVHAREPFRHHSYLSDKAIGVICGFGAQGYEFALAAAIKRLKA.

Tyrosine 24 (proton acceptor) is an active-site residue. The substrate site is built by asparagine 73, histidine 79, and aspartate 86. Histidine 99 functions as the Proton donor in the catalytic mechanism. Residues 100 to 101 (LS) and arginine 110 each bind substrate.

This sequence belongs to the type-II 3-dehydroquinase family. In terms of assembly, homododecamer.

It carries out the reaction 3-dehydroquinate = 3-dehydroshikimate + H2O. It participates in metabolic intermediate biosynthesis; chorismate biosynthesis; chorismate from D-erythrose 4-phosphate and phosphoenolpyruvate: step 3/7. Its function is as follows. Catalyzes a trans-dehydration via an enolate intermediate. The protein is 3-dehydroquinate dehydratase of Shewanella sp. (strain ANA-3).